A 277-amino-acid chain; its full sequence is MSRVRISLIYLYTLVVITTTKTIEYTACNDTIIIPCTIDNPTKYIRWKLDNHDILTYNKTSKTTILSKWHTSARLHSLSDSDVSLIIEYKDILPGTYTCEDNTGIKSTVKLVQLHTNWFNDYQTMLMFIFTGITLFLLFLEITYTSISVVFSTNLGILQVFGCVIAMIELCGAFLFYPSMFTLRHIIGLLMMTLPSIFLIITKVFSFWLLCKLSCAVHLIIYYQLAGYILTVLGLGLSLKECVDGTLLLSGLGTIMVSEHFSLLFLVCFPSTQRDYY.

N-linked (GlcNAc...) asparagine; by host glycosylation is found at Asn-29 and Asn-58. 5 helical membrane passes run Thr-124 to Tyr-144, Gly-156 to Phe-176, Ile-186 to Ser-206, Leu-219 to Leu-239, and Leu-247 to Val-267.

The protein belongs to the orthopoxvirus OPG166 protein family.

Its subcellular location is the host membrane. Promotes, when overexpressed, the influx of extracellular Ca(2+), leading to membrane permeability and host cell necrosis. The chain is Protein OPG166 (OPG166) from Vaccinia virus (strain Copenhagen) (VACV).